A 189-amino-acid chain; its full sequence is Protein CURLY FLAG LEAF 1 (189 aa).

The EAR signature appears at Thr50–Ser55. Residues Leu57–Lys91 form the WW domain. The segment at Arg90–Asp148 is disordered. 2 stretches are compositionally biased toward acidic residues: residues Ser108–Ser121 and Glu135–Asp148.

Interacts with BHLH122/CFLAP1 and BHLH80/CFLAP2. Binds to HDG1. Mostly observed in roots, flowers and siliques. Expressed in cells differentiated from epidermal cells such as trichomes, stigmatic papillar cells and guard cells, as well as in tissues undergoing abscission and dehiscence.

Functionally, negatively regulates the cuticle development by interacting with the HD-ZIP IV transcription factor HDG1. In Arabidopsis thaliana (Mouse-ear cress), this protein is Protein CURLY FLAG LEAF 1.